Here is a 319-residue protein sequence, read N- to C-terminus: tRNA-modifying protein YgfZ (319 aa).

Trp-27 and Trp-189 together coordinate folate.

Belongs to the tRNA-modifying YgfZ family.

The protein localises to the cytoplasm. Folate-binding protein involved in regulating the level of ATP-DnaA and in the modification of some tRNAs. It is probably a key factor in regulatory networks that act via tRNA modification, such as initiation of chromosomal replication. In Buchnera aphidicola subsp. Acyrthosiphon pisum (strain APS) (Acyrthosiphon pisum symbiotic bacterium), this protein is tRNA-modifying protein YgfZ.